Reading from the N-terminus, the 213-residue chain is NDR1/HIN1-like protein 26 (213 aa).

Residues 1–27 (MSQISITSPKHCAKKGGININNRHKKL) are Cytoplasmic-facing. A helical transmembrane segment spans residues 28 to 48 (FFTFSTFFSGLLLIIFLVWLI). The Lumenal segment spans residues 49–213 (LHPERPEFSL…LQGTRCSTTI (165 aa)). Residues asparagine 67, asparagine 77, and asparagine 195 are each glycosylated (N-linked (GlcNAc...) asparagine).

Expressed in the vasculature of roots, rosette leaves, stems, cauline leaves and flowers. Specifically expressed in phloem.

Its subcellular location is the cell junction. The protein resides in the plasmodesma. The protein localises to the endoplasmic reticulum membrane. Involved in the regulation of sugar, amino acid and some primary metabolite export from companion cells (CCs) to sieve elements (SEs) in phloem. Required for apoplastic phloem sugar loading in source leaves in order to transport it to sink tissues. Required for correct sugar partitioning between source leaves and sink organs. The chain is NDR1/HIN1-like protein 26 from Arabidopsis thaliana (Mouse-ear cress).